The chain runs to 207 residues: Large ribosomal subunit protein uL4 (207 aa).

The interval 56 to 76 (EVRGGGRKPWRQKGTGRARAG) is disordered. A compositionally biased stretch (basic residues) spans 60–71 (GGRKPWRQKGTG).

It belongs to the universal ribosomal protein uL4 family. As to quaternary structure, part of the 50S ribosomal subunit.

Functionally, one of the primary rRNA binding proteins, this protein initially binds near the 5'-end of the 23S rRNA. It is important during the early stages of 50S assembly. It makes multiple contacts with different domains of the 23S rRNA in the assembled 50S subunit and ribosome. In terms of biological role, forms part of the polypeptide exit tunnel. The chain is Large ribosomal subunit protein uL4 from Desulfitobacterium hafniense (strain DSM 10664 / DCB-2).